Consider the following 84-residue polypeptide: Translational regulator CsrA (84 aa).

Belongs to the CsrA/RsmA family. As to quaternary structure, homodimer; the beta-strands of each monomer intercalate to form a hydrophobic core, while the alpha-helices form wings that extend away from the core.

The protein localises to the cytoplasm. In terms of biological role, a translational regulator that binds mRNA to regulate translation initiation and/or mRNA stability. Usually binds in the 5'-UTR at or near the Shine-Dalgarno sequence preventing ribosome-binding, thus repressing translation. Its main target seems to be the major flagellin gene, while its function is anatagonized by FliW. The chain is Translational regulator CsrA from Leptospira borgpetersenii serovar Hardjo-bovis (strain JB197).